A 520-amino-acid polypeptide reads, in one-letter code: Ribonuclease Y (520 aa).

A helical membrane pass occupies residues 3 to 23; the sequence is IEIQWIGIGAAFLVGAIGGAL. One can recognise a KH domain in the interval 210–273; sequence AVSVVPLPND…EVARLALERL (64 aa). The 94-residue stretch at 336–429 folds into the HD domain; the sequence is VLQHSIEVAF…VQAADALSGA (94 aa).

Belongs to the RNase Y family.

The protein resides in the cell membrane. Its function is as follows. Endoribonuclease that initiates mRNA decay. This chain is Ribonuclease Y, found in Syntrophotalea carbinolica (strain DSM 2380 / NBRC 103641 / GraBd1) (Pelobacter carbinolicus).